The sequence spans 476 residues: MTKQYKNYVNGEWKLSKEEIKIYAPATGEELGSVPAMSQEEVDYVYASAKAAQKAWRALSYVERAEYLHKAADILMRDAEKIGAVLSKEIAKGYKSAVGEVIRTAEIINYAAEEGVRLEGEVLEGGSFDPASKKKIAIVRREPVGLVLAISPFNYPINLAGSKIAPALISGNVVALKPPTQGSISGLLLAEAFAEAGLPAGVFNTITGRGSVIGDYIVEHEAVNYINFTGSTPVGEHIGHLAGMRPIMLELGGKDSAIILEDADLDLAAKNIVAGAYGYSGQRCTAVKRVLVMDSIADKLVEKVSALVNNLTVGMPEDNADITPLIDTKAADYVEGLIKDAQEKGAKEVISFKREGNLISPVLFDNVTTDMRLAWEEPFGPVLPFIRVNSVEEAIEISNKSEYGLQASVFTNNFPLAFKIAEQLEVGTVHINNKTQRGTDNFPFLGAKKSGAGVQGVKYSIEAMTTVKSTVFDIAK.

R103 is a substrate binding site. S151 provides a ligand contact to NADP(+). 154-155 (NY) contacts substrate. NADP(+) is bound by residues K177, T180, D215, and 230–251 (GSTP…MLEL). Active-site residues include E250 and C284. 283-285 (RCT) contacts substrate. E377 is an NADP(+) binding site. Residue R437 coordinates substrate.

Belongs to the aldehyde dehydrogenase family. In terms of assembly, homotetramer.

It catalyses the reaction D-glyceraldehyde 3-phosphate + NADP(+) + H2O = (2R)-3-phosphoglycerate + NADPH + 2 H(+). Catalyzes the irreversible NADP-dependent oxidation of glyceraldehyde-3-phosphate to 3-phosphoglycerate. Is not able to use NAD instead of NADP. May play an important role in NADPH production in S.equinus. The protein is NADP-dependent glyceraldehyde-3-phosphate dehydrogenase (gapN) of Streptococcus equinus (Streptococcus bovis).